Consider the following 185-residue polypeptide: Elongation factor P (185 aa).

This sequence belongs to the elongation factor P family.

The protein resides in the cytoplasm. The protein operates within protein biosynthesis; polypeptide chain elongation. Involved in peptide bond synthesis. Stimulates efficient translation and peptide-bond synthesis on native or reconstituted 70S ribosomes in vitro. Probably functions indirectly by altering the affinity of the ribosome for aminoacyl-tRNA, thus increasing their reactivity as acceptors for peptidyl transferase. The sequence is that of Elongation factor P from Nitrosomonas europaea (strain ATCC 19718 / CIP 103999 / KCTC 2705 / NBRC 14298).